Consider the following 687-residue polypeptide: MSVRYPLLNRELGILGFNERVLAQAADPQVPLLERLRFICITSSNLDEFFEVRMAGLQEQIRDNPGALTPDGMSLQHAYDLVVERAQRLVHRQYTMLHETVLPALEQEGIYFHASDTWNDEQLEWARRYFLDELLPVLTPIGLDPAHPFPRVLNKSLNFVVELEGRDAFGRQAVMGIVQAPRALPRVVRMPHALSGFEHGFVLLSSFMQYFVGELFPQLTVKSCNQFRITRNSELFVDEDEITNLRVALQGELPARHLGNAVRLEVSADTPPHIVRRLLVESELGEKDCYRVAGSVNLVRLMQIPDLVDRPDLKFTPFTASTPSAITNAPTMFDAIDNGDILLHHPYESFQPVLELLQQAARDPSVVAIKQTIYRTGTDSPLMDALMEAARNGKEVTVVVELLARFDEETNINWASQLEAVGAHVVYGVVGHKCHAKMMLIVRRVVQAGKASLRRYVHLGTGNYHPRTARLYTDFGLMTADQKICEDVHHVFQQLTGIGGELTLHELWQSPFTLHPRIIDAIRVEIDNARAGKRARVVAKMNALLEPTVIAALYEASQAGVKVDLIVRGVCALKPGVPGLSENITVRSIVGRFLEHHRIYYFHANGAEDVYLSSADWMDRNLFRRVEVAFPIRDRKLKRRVIAEGLSVCLGDNQSAWQMHSDGHYRRRRAGKTIRNAQLGLLAKFCS.

Asparagine 45 provides a ligand contact to ATP. Residues arginine 375 and arginine 405 each coordinate Mg(2+). The active-site Phosphohistidine intermediate is histidine 435. Residues tyrosine 472, arginine 568, and histidine 596 each coordinate ATP.

Belongs to the polyphosphate kinase 1 (PPK1) family. Requires Mg(2+) as cofactor. An intermediate of this reaction is the autophosphorylated ppk in which a phosphate is covalently linked to a histidine residue through a N-P bond.

The enzyme catalyses [phosphate](n) + ATP = [phosphate](n+1) + ADP. Functionally, catalyzes the reversible transfer of the terminal phosphate of ATP to form a long-chain polyphosphate (polyP). The chain is Polyphosphate kinase from Burkholderia lata (strain ATCC 17760 / DSM 23089 / LMG 22485 / NCIMB 9086 / R18194 / 383).